A 316-amino-acid chain; its full sequence is MARKSSAPQFLSYGDATGRLSWRDAVEALRQGHTLPQAQIRDVFLGPPTGTMMSRSAWIEGLGYGAKTFTVFDGNAARGLPTVQGAMLVFDKDDGRLQAIVDSPLVTEFKTAADSVLGASLLARPDSRHLLIVGAGTVAASLVRAYTAVLPGIERVSVWARRPQQAQDLIEGLDGIEADLAAVSDLPAAVGQADIVSSATMARQPVILGAWVRPGTHVDLIGAFKADMREADDALMARAALFVDSRETTLGHIGELMLPIASGAITAESVLGDLYDLVRPGARRRQSEDEITVFKNGGGAHLDLMIASYIARVMAG.

Belongs to the ornithine cyclodeaminase/mu-crystallin family.

The catalysed reaction is L-proline + NAD(+) = 1-pyrroline-2-carboxylate + NADH + H(+). It catalyses the reaction L-proline + NADP(+) = 1-pyrroline-2-carboxylate + NADPH + H(+). In terms of biological role, catalyzes the reduction of Delta(1)-pyrroline-2-carboxylate (Pyr2C) to L-proline, using preferentially NADPH over NADH as the electron donor. Is likely involved in a degradation pathway that converts trans-3-hydroxy-L-proline (t3LHyp) to L-proline, which would allow P.denitrificans to grow on t3LHyp as a sole carbon source. The sequence is that of Delta(1)-pyrroline-2-carboxylate reductase from Paracoccus denitrificans (strain Pd 1222).